The primary structure comprises 142 residues: Large ribosomal subunit protein uL13 (142 aa).

This sequence belongs to the universal ribosomal protein uL13 family. In terms of assembly, part of the 50S ribosomal subunit.

Functionally, this protein is one of the early assembly proteins of the 50S ribosomal subunit, although it is not seen to bind rRNA by itself. It is important during the early stages of 50S assembly. The protein is Large ribosomal subunit protein uL13 of Treponema pallidum (strain Nichols).